The primary structure comprises 135 residues: Large ribosomal subunit protein uL16c (135 aa).

Belongs to the universal ribosomal protein uL16 family. In terms of assembly, part of the 50S ribosomal subunit.

Its subcellular location is the plastid. It localises to the chloroplast. The polypeptide is Large ribosomal subunit protein uL16c (Panax ginseng (Korean ginseng)).